The chain runs to 643 residues: Phosphomethylpyrimidine synthase (643 aa).

Residues Asn248, Met277, Tyr306, His342, 362–364 (SRG), 403–406 (DGLR), and Glu442 contribute to the substrate site. Zn(2+) is bound at residue His446. Position 469 (Tyr469) interacts with substrate. His510 contacts Zn(2+). Positions 590, 593, and 598 each coordinate [4Fe-4S] cluster.

The protein belongs to the ThiC family. Homodimer. It depends on [4Fe-4S] cluster as a cofactor.

It catalyses the reaction 5-amino-1-(5-phospho-beta-D-ribosyl)imidazole + S-adenosyl-L-methionine = 4-amino-2-methyl-5-(phosphooxymethyl)pyrimidine + CO + 5'-deoxyadenosine + formate + L-methionine + 3 H(+). It functions in the pathway cofactor biosynthesis; thiamine diphosphate biosynthesis. Functionally, catalyzes the synthesis of the hydroxymethylpyrimidine phosphate (HMP-P) moiety of thiamine from aminoimidazole ribotide (AIR) in a radical S-adenosyl-L-methionine (SAM)-dependent reaction. The polypeptide is Phosphomethylpyrimidine synthase (Paraburkholderia xenovorans (strain LB400)).